The chain runs to 85 residues: Cell division topological specificity factor (85 aa).

Belongs to the MinE family.

Prevents the cell division inhibition by proteins MinC and MinD at internal division sites while permitting inhibition at polar sites. This ensures cell division at the proper site by restricting the formation of a division septum at the midpoint of the long axis of the cell. The polypeptide is Cell division topological specificity factor (Stutzerimonas stutzeri (strain A1501) (Pseudomonas stutzeri)).